We begin with the raw amino-acid sequence, 644 residues long: Exoribonuclease 2 (644 aa).

The RNB domain maps to 189–516 (RQDLTALNFV…NHRLLKAVIK (328 aa)). One can recognise an S1 motif domain in the interval 561 to 643 (NTRFAAEIID…ETRSIIARPA (83 aa)).

It belongs to the RNR ribonuclease family. RNase II subfamily.

It localises to the cytoplasm. The enzyme catalyses Exonucleolytic cleavage in the 3'- to 5'-direction to yield nucleoside 5'-phosphates.. In terms of biological role, involved in mRNA degradation. Hydrolyzes single-stranded polyribonucleotides processively in the 3' to 5' direction. The chain is Exoribonuclease 2 from Salmonella agona (strain SL483).